The following is a 151-amino-acid chain: Small ribosomal subunit protein uS15 (151 aa).

Phosphoserine is present on residues Ser-21 and Ser-32.

The protein belongs to the universal ribosomal protein uS15 family. In terms of assembly, component of the small ribosomal subunit (SSU). Mature yeast ribosomes consist of a small (40S) and a large (60S) subunit. The 40S small subunit contains 1 molecule of ribosomal RNA (18S rRNA) and at least 33 different proteins. The large 60S subunit contains 3 rRNA molecules (25S, 5.8S and 5S rRNA) and at least 46 different proteins.

It localises to the cytoplasm. Functionally, component of the ribosome, a large ribonucleoprotein complex responsible for the synthesis of proteins in the cell. The small ribosomal subunit (SSU) binds messenger RNAs (mRNAs) and translates the encoded message by selecting cognate aminoacyl-transfer RNA (tRNA) molecules. The large subunit (LSU) contains the ribosomal catalytic site termed the peptidyl transferase center (PTC), which catalyzes the formation of peptide bonds, thereby polymerizing the amino acids delivered by tRNAs into a polypeptide chain. The nascent polypeptides leave the ribosome through a tunnel in the LSU and interact with protein factors that function in enzymatic processing, targeting, and the membrane insertion of nascent chains at the exit of the ribosomal tunnel. The protein is Small ribosomal subunit protein uS15 (rps13) of Schizosaccharomyces pombe (strain 972 / ATCC 24843) (Fission yeast).